The sequence spans 359 residues: MGSQFSVLNRKWLIERSIMIEKRKRRSNKLIKILMMGNENSAKSTFAKKVKSIYQSDKIENSDANSILPYIKLYLSNSFKDVIKFIQQHPQSPDTKPMVSTQLGIIAWDKLSSFNYIPFNFKPTKELAKYIYDICHDPLFKSYIYPIISSKREDAFYLIENCKRMSNDDYIPNDEDIIRCSKNNQSGVFDTKLEIGKSEFVFVDTGNQKCDRKKWVHQFEDVDIILFFLALDEFDLPPDEIKSQSQSVHDCYNKLNENILVFDEIVNNHFFSNTPVIVLFNKKEQLIEKLKTTTFSQHYPDYQSNSNNPNDIFSFISNQFKLRDHFPLNKRLFIHSFNSSDTNQIDFFQYVKKILEDTI.

Gly2 carries the N-myristoyl glycine lipid modification. Residues 29–359 (KLIKILMMGN…YVKKILEDTI (331 aa)) form the G-alpha domain. Residues 32-45 (KILMMGNENSAKST) are G1 motif. Ser44 provides a ligand contact to Mg(2+). The interval 176-185 (DIIRCSKNNQ) is G2 motif. GTP contacts are provided by residues 178-185 (IRCSKNNQ), 204-208 (DTGNQ), and 281-284 (NKKE). The interval 200–209 (FVFVDTGNQK) is G3 motif. Positions 277-284 (IVLFNKKE) are G4 motif. Residues 337–342 (FNSSDT) form a G5 motif region.

The protein belongs to the G-alpha family.

In Dictyostelium discoideum (Social amoeba), this protein is Guanine nucleotide-binding protein-like alpha-11 subunit (gpaK).